We begin with the raw amino-acid sequence, 339 residues long: Protein H339R (339 aa).

This sequence belongs to the asfivirus H339R family. In terms of assembly, interacts with NACA (alpha chain of nascent polypeptide-associated complex).

It is found in the host cytoplasm. The protein resides in the host nucleus. It localises to the virion. This Ornithodoros (relapsing fever ticks) protein is Protein H339R.